Reading from the N-terminus, the 234-residue chain is MMAIQNREEFLLQLSEKLGRKRPEAVEKPKWSFSPQWNVFDGLAQDELVLQLMEHCEVIHTEVKRTTKENLVETLGSLIKEWNIKSAMYSNDERFNEYGLTSCFNNEGTTHFRAWGLGDKEEDIKFAKAADLGITFSDMTLAESGTVVLFNDGLKGRHVSLLPESYIAIVPKSTIVPRLTQATKLIHNQSKAGENLPACVNFVSGPSNSADIEMNLVVGVHGPIRTAYIIVDDQ.

The protein belongs to the LutC/YkgG family.

Its function is as follows. Is involved in L-lactate degradation and allows cells to grow with lactate as the sole carbon source. This is Lactate utilization protein C 1 from Bacillus mycoides (strain KBAB4) (Bacillus weihenstephanensis).